A 205-amino-acid polypeptide reads, in one-letter code: Putative lipoprotein LppC (205 aa).

A signal peptide spans M1–G27. The N-palmitoyl cysteine moiety is linked to residue C28. A lipid anchor (S-diacylglycerol cysteine) is attached at C28. Residues G126–G145 are disordered.

The protein belongs to the UPF0098 family.

It is found in the cell membrane. This is Putative lipoprotein LppC (lppC) from Mycobacterium tuberculosis (strain CDC 1551 / Oshkosh).